A 370-amino-acid polypeptide reads, in one-letter code: Putative F-box protein At1g46984 (370 aa).

The F-box domain maps to 18–64 (YTQLSTLPIDLIIEILSRLPMNSIAICRLVSKQWASILQSSDFTESF).

The polypeptide is Putative F-box protein At1g46984 (Arabidopsis thaliana (Mouse-ear cress)).